The primary structure comprises 236 residues: Large ribosomal subunit protein uL3 (236 aa).

Residues 139 to 149 show a composition bias toward low complexity; sequence SVSHRSHGSTG. A disordered region spans residues 139 to 165; it reads SVSHRSHGSTGQRQDPGKVFKGKKMAG. Glutamine 152 carries the N5-methylglutamine modification.

Belongs to the universal ribosomal protein uL3 family. As to quaternary structure, part of the 50S ribosomal subunit. Forms a cluster with proteins L14 and L19. Methylated by PrmB.

Functionally, one of the primary rRNA binding proteins, it binds directly near the 3'-end of the 23S rRNA, where it nucleates assembly of the 50S subunit. This chain is Large ribosomal subunit protein uL3, found in Pelagibacter ubique (strain HTCC1062).